A 517-amino-acid chain; its full sequence is MSILRSPYQCLKQCGNYLVAARGSSIDTFDIKNGSYLSTWKSPVPESMSRSKTTEEETQTKNEDQNSETATPEFILESSAPPAKRRKLSITKESGENTGVVQQSKKKTKNSSPKILEPSPITALTITRDLQHVIAVTGEDKTIRVLAWEDTVEKGLRQISDRTMPKRPCALAITDDCNTIISADKFGDVYSLPLIPSPLVPSATENASVQKQAPKMFQPSASALTVHSARNLKALEAQKKQSNKVSEKTGPDFEHKLLLGHVSMLTDILVATLSGRQYILTADRDEHIRISRGIPQAHIIENFCLGHIEYVSRLCIPPTRPEILISGGGDDDLYTWNWLNGSLLSKTNLKSQVEALDTEKQSAQEAESKKIAVTGVYHARDEVSNQDIIIATSEGVPAAFIYFLTASNQLTHTQTLALPGNALSCTFSNPDLSSPFSLIISINNIHEPSSITTLKDANSSVANPLQFFKYENEKFVSVQQDGFAPQDSEGILDDQQKNNLCGLLYNVGNLRKMEDEE.

The disordered stretch occupies residues 40-117; the sequence is WKSPVPESMS…TKNSSPKILE (78 aa). Over residues 52–64 the composition is skewed to basic and acidic residues; it reads KTTEEETQTKNED. WD repeat units follow at residues 116–158, 260–301, and 306–346; these read LEPS…GLRQ, GHVS…HIIE, and GHIE…LLSK.

It belongs to the WD repeat TRM82 family. As to quaternary structure, forms a heterodimer with the catalytic subunit trm8.

It localises to the nucleus. The protein operates within tRNA modification; N(7)-methylguanine-tRNA biosynthesis. Required for the formation of N(7)-methylguanine at position 46 (m7G46) in tRNA. In the complex, it is required to stabilize and induce conformational changes of the catalytic subunit. The sequence is that of tRNA (guanine-N(7)-)-methyltransferase non-catalytic subunit trm82 (trm82) from Sclerotinia sclerotiorum (strain ATCC 18683 / 1980 / Ss-1) (White mold).